The chain runs to 1195 residues: Error-prone DNA polymerase (1195 aa).

Residues Ala1163 to His1195 are disordered.

Belongs to the DNA polymerase type-C family. DnaE2 subfamily.

The protein resides in the cytoplasm. The catalysed reaction is DNA(n) + a 2'-deoxyribonucleoside 5'-triphosphate = DNA(n+1) + diphosphate. Functionally, DNA polymerase involved in damage-induced mutagenesis and translesion synthesis (TLS). It is not the major replicative DNA polymerase. The sequence is that of Error-prone DNA polymerase from Rhodopseudomonas palustris (strain ATCC BAA-98 / CGA009).